A 347-amino-acid polypeptide reads, in one-letter code: D-fructose 1,6-bisphosphatase class 2/sedoheptulose 1,7-bisphosphatase (347 aa).

Mn(2+) is bound by residues D33, E57, D97, and E100. Substrate contacts are provided by residues 100–102, Y131, 176–178, and 198–200; these read EGT, RDR, and DGD. E225 is a Mn(2+) binding site.

This sequence belongs to the FBPase class 2 family. In terms of assembly, homotetramer. Requires Mn(2+) as cofactor.

The catalysed reaction is beta-D-fructose 1,6-bisphosphate + H2O = beta-D-fructose 6-phosphate + phosphate. The enzyme catalyses D-sedoheptulose 1,7-bisphosphate + H2O = D-sedoheptulose 7-phosphate + phosphate. Its pathway is carbohydrate biosynthesis; Calvin cycle. In terms of biological role, catalyzes the hydrolysis of fructose 1,6-bisphosphate (Fru 1,6-P2) and sedoheptulose 1,7-bisphosphate (Sed 1,7-P2) to fructose 6-phosphate and sedoheptulose 7-phosphate, respectively. This chain is D-fructose 1,6-bisphosphatase class 2/sedoheptulose 1,7-bisphosphatase, found in Thermosynechococcus vestitus (strain NIES-2133 / IAM M-273 / BP-1).